We begin with the raw amino-acid sequence, 215 residues long: UPF0502 protein YceH (215 aa).

Belongs to the UPF0502 family.

This Salmonella schwarzengrund (strain CVM19633) protein is UPF0502 protein YceH.